An 82-amino-acid chain; its full sequence is Small ribosomal subunit protein bS16 (82 aa).

It belongs to the bacterial ribosomal protein bS16 family.

The chain is Small ribosomal subunit protein bS16 from Enterobacter sp. (strain 638).